Consider the following 501-residue polypeptide: DEAD-box ATP-dependent RNA helicase 36 (501 aa).

The tract at residues 1–68 (MEVDGEARPF…AAAVTEHAGD (68 aa)) is disordered. Residues 36–46 (EEPPNPSPSPA) show a composition bias toward pro residues. The segment covering 59 to 68 (AAAVTEHAGD) has biased composition (low complexity). Residues 77-105 (STFAELGLSQWLVDVCDSLGMRVPTAVQR) carry the Q motif motif. Residues 108 to 281 (IPRALEGRDV…ELSGNNSYFF (174 aa)) form the Helicase ATP-binding domain. Residue 121–128 (AETGSGKT) coordinates ATP. Positions 229 to 232 (DEAD) match the DEAD box motif. The 165-residue stretch at 292 to 456 (TLKQLYIHVP…AYDGEMRDVN (165 aa)) folds into the Helicase C-terminal domain. Basic and acidic residues predominate over residues 473–486 (MADEGHEDKVQARK). The disordered stretch occupies residues 473-501 (MADEGHEDKVQARKEQKKRAQERKRKHDE). Positions 475–501 (DEGHEDKVQARKEQKKRAQERKRKHDE) form a coiled coil. The segment covering 487–501 (EQKKRAQERKRKHDE) has biased composition (basic residues).

It belongs to the DEAD box helicase family. DDX49/DBP8 subfamily.

It carries out the reaction ATP + H2O = ADP + phosphate + H(+). This is DEAD-box ATP-dependent RNA helicase 36 from Oryza sativa subsp. japonica (Rice).